A 336-amino-acid polypeptide reads, in one-letter code: Protein FPV127 (336 aa).

A disordered region spans residues 1–22 (MGGGLVLPTRDPPKEQDTSETA).

The protein belongs to the poxviruses A16/G9/J5 family.

This Vertebrata (FPV) protein is Protein FPV127.